An 89-amino-acid chain; its full sequence is UPF0367 protein PMM0124 (89 aa).

The protein belongs to the UPF0367 family.

In Prochlorococcus marinus subsp. pastoris (strain CCMP1986 / NIES-2087 / MED4), this protein is UPF0367 protein PMM0124.